Here is a 380-residue protein sequence, read N- to C-terminus: Succinyl-diaminopimelate desuccinylase (380 aa).

H71 lines the Zn(2+) pocket. Residue D73 is part of the active site. D104 is a binding site for Zn(2+). E138 serves as the catalytic Proton acceptor. The Zn(2+) site is built by E139, E167, and H353.

This sequence belongs to the peptidase M20A family. DapE subfamily. Homodimer. Zn(2+) serves as cofactor. It depends on Co(2+) as a cofactor.

The enzyme catalyses N-succinyl-(2S,6S)-2,6-diaminopimelate + H2O = (2S,6S)-2,6-diaminopimelate + succinate. The protein operates within amino-acid biosynthesis; L-lysine biosynthesis via DAP pathway; LL-2,6-diaminopimelate from (S)-tetrahydrodipicolinate (succinylase route): step 3/3. In terms of biological role, catalyzes the hydrolysis of N-succinyl-L,L-diaminopimelic acid (SDAP), forming succinate and LL-2,6-diaminopimelate (DAP), an intermediate involved in the bacterial biosynthesis of lysine and meso-diaminopimelic acid, an essential component of bacterial cell walls. The chain is Succinyl-diaminopimelate desuccinylase from Shewanella baltica (strain OS185).